A 141-amino-acid polypeptide reads, in one-letter code: Nucleoside diphosphate kinase (141 aa).

6 residues coordinate ATP: Lys9, Phe57, Arg85, Thr91, Arg102, and Asn112. Residue His115 is the Pros-phosphohistidine intermediate of the active site.

The protein belongs to the NDK family. In terms of assembly, homotetramer. Mg(2+) is required as a cofactor.

Its subcellular location is the cytoplasm. The catalysed reaction is a 2'-deoxyribonucleoside 5'-diphosphate + ATP = a 2'-deoxyribonucleoside 5'-triphosphate + ADP. It carries out the reaction a ribonucleoside 5'-diphosphate + ATP = a ribonucleoside 5'-triphosphate + ADP. Its function is as follows. Major role in the synthesis of nucleoside triphosphates other than ATP. The ATP gamma phosphate is transferred to the NDP beta phosphate via a ping-pong mechanism, using a phosphorylated active-site intermediate. The sequence is that of Nucleoside diphosphate kinase from Chlamydia caviae (strain ATCC VR-813 / DSM 19441 / 03DC25 / GPIC) (Chlamydophila caviae).